Reading from the N-terminus, the 379-residue chain is NADH-quinone oxidoreductase subunit D 2 (379 aa).

The protein belongs to the complex I 49 kDa subunit family. NDH-1 is composed of 14 different subunits. Subunits NuoB, C, D, E, F, and G constitute the peripheral sector of the complex.

The protein localises to the cell inner membrane. The catalysed reaction is a quinone + NADH + 5 H(+)(in) = a quinol + NAD(+) + 4 H(+)(out). NDH-1 shuttles electrons from NADH, via FMN and iron-sulfur (Fe-S) centers, to quinones in the respiratory chain. The immediate electron acceptor for the enzyme in this species is believed to be ubiquinone. Couples the redox reaction to proton translocation (for every two electrons transferred, four hydrogen ions are translocated across the cytoplasmic membrane), and thus conserves the redox energy in a proton gradient. This chain is NADH-quinone oxidoreductase subunit D 2, found in Anaeromyxobacter dehalogenans (strain 2CP-C).